Reading from the N-terminus, the 68-residue chain is ATP synthase F(0) complex subunit 8 (68 aa).

A helical transmembrane segment spans residues 8 to 24 (VWPTMIAPMLLTLFLIT). The residue at position 54 (Lys54) is an N6-acetyllysine; alternate. N6-succinyllysine; alternate is present on Lys54. An N6-acetyllysine modification is found at Lys57.

This sequence belongs to the ATPase protein 8 family. As to quaternary structure, component of the ATP synthase complex composed at least of ATP5F1A/subunit alpha, ATP5F1B/subunit beta, ATP5MC1/subunit c (homooctomer), MT-ATP6/subunit a, MT-ATP8/subunit 8, ATP5ME/subunit e, ATP5MF/subunit f, ATP5MG/subunit g, ATP5MK/subunit k, ATP5MJ/subunit j, ATP5F1C/subunit gamma, ATP5F1D/subunit delta, ATP5F1E/subunit epsilon, ATP5PF/subunit F6, ATP5PB/subunit b, ATP5PD/subunit d, ATP5PO/subunit OSCP. ATP synthase complex consists of a soluble F(1) head domain (subunits alpha(3) and beta(3)) - the catalytic core - and a membrane F(0) domain - the membrane proton channel (subunits c, a, 8, e, f, g, k and j). These two domains are linked by a central stalk (subunits gamma, delta, and epsilon) rotating inside the F1 region and a stationary peripheral stalk (subunits F6, b, d, and OSCP). Interacts with PRICKLE3.

It is found in the mitochondrion membrane. In terms of biological role, subunit 8, of the mitochondrial membrane ATP synthase complex (F(1)F(0) ATP synthase or Complex V) that produces ATP from ADP in the presence of a proton gradient across the membrane which is generated by electron transport complexes of the respiratory chain. ATP synthase complex consist of a soluble F(1) head domain - the catalytic core - and a membrane F(1) domain - the membrane proton channel. These two domains are linked by a central stalk rotating inside the F(1) region and a stationary peripheral stalk. During catalysis, ATP synthesis in the catalytic domain of F(1) is coupled via a rotary mechanism of the central stalk subunits to proton translocation. In vivo, can only synthesize ATP although its ATP hydrolase activity can be activated artificially in vitro. Part of the complex F(0) domain. In Gorilla gorilla gorilla (Western lowland gorilla), this protein is ATP synthase F(0) complex subunit 8.